A 316-amino-acid chain; its full sequence is uncharacterized protein (316 aa).

Residues 16–89 (ERLDKFLARA…IPINIIYEDE (74 aa)) enclose the S4 RNA-binding domain. The active site involves D140.

This sequence belongs to the pseudouridine synthase RluA family.

It carries out the reaction a uridine in RNA = a pseudouridine in RNA. This is an uncharacterized protein from Aquifex aeolicus (strain VF5).